Here is a 230-residue protein sequence, read N- to C-terminus: Type II restriction enzyme NlaIII (230 aa).

It carries out the reaction Endonucleolytic cleavage of DNA to give specific double-stranded fragments with terminal 5'-phosphates.. Its function is as follows. A P subtype restriction enzyme that recognizes the double-stranded sequence 5'-CATG-3' and cleaves after G-4. The polypeptide is Type II restriction enzyme NlaIII (nlaIIIR) (Neisseria lactamica).